The primary structure comprises 510 residues: Allene oxide synthase 2, chloroplastic (510 aa).

The N-terminal 31 residues, 1-31 (MALTLSFSLPLPSLHQKIPSKYSTFRPIIVS), are a transit peptide targeting the chloroplast. Residues K127, H158, and K162 each contribute to the heme b site. Residues N315 and K321 each coordinate (13S)-hydroperoxy-(9Z,11E)-octadecadienoate. (13S)-hydroperoxy-(9Z,11E,15Z)-octadecatrienoate is bound at residue N315. Heme b-binding residues include K463 and C465.

The protein belongs to the cytochrome P450 family. The cofactor is heme b. As to expression, expressed in flower buds, leaves, roots, stems, petioles and cotyledons. Not detected in ripe fruits. Expressed in sieve elements.

The protein resides in the plastid. It is found in the chloroplast inner membrane. It catalyses the reaction (13S)-hydroperoxy-(9Z,11E,15Z)-octadecatrienoate = (9Z,13S,15Z)-12,13-epoxyoctadeca-9,11,15-trienoate + H2O. The catalysed reaction is (13S)-hydroperoxy-(9Z,11E)-octadecadienoate = (9Z,13S)-12,13-epoxyoctadeca-9,11-dienoate + H2O. Its function is as follows. Cytochrome P450 of the CYP74A subfamily involved in the biosynthesis of jasmonic acid from lipoxygenase-derived hydroperoxides of free fatty acids. Catalyzes the synthesis of unstable allene oxide, which is further converted spontaneously by hydrolysis or cyclization. Metabolizes 13- but not 9-hydroperoxides of linoleic and linolenic acids. Can use 15S-hydroperoxy-11(Z),13(E),17(Z)-eicosatrienoic acid (15-HPET) and 13S-hydroperoxy-9(Z),11(E),15(Z)-octadecatrienoic acid (13-HPOT) as substrates, but only 50% activity with 13S-hydroperoxy-9(Z),11(E)-octadecadienoic acid (13-HPOD). The polypeptide is Allene oxide synthase 2, chloroplastic (Solanum lycopersicum (Tomato)).